Consider the following 671-residue polypeptide: Talaropentaene synthase (671 aa).

Residue aspartate 92 coordinates Mg(2+). Positions 92-96 (DDMTD) match the DDXXD 1 motif. An NSE/DTE motif is present at residues 223–231 (NDLYSYEKE). Lysine 389, arginine 392, and histidine 421 together coordinate isopentenyl diphosphate. Mg(2+)-binding residues include aspartate 428 and aspartate 432. The DDXXD 2 motif lies at 428-432 (DDIED). Position 437 (arginine 437) interacts with dimethylallyl diphosphate. Arginine 438 contacts isopentenyl diphosphate. The dimethylallyl diphosphate site is built by lysine 515, threonine 516, glutamine 551, asparagine 558, lysine 568, and lysine 578.

In the N-terminal section; belongs to the terpene synthase family. It in the C-terminal section; belongs to the FPP/GGPP synthase family. The cofactor is Mg(2+).

The catalysed reaction is 5 isopentenyl diphosphate + dimethylallyl diphosphate = all-trans-hexaprenyl diphosphate + 5 diphosphate. The enzyme catalyses all-trans-hexaprenyl diphosphate = talaropentaene + diphosphate. Functionally, bifunctional terpene synthase that converts dimethylallyl diphosphate (DMAPP) and isopentenyl diphosphate (IPP) into talaropentaene as a single product. The C-terminal prenyltransferase (PT) domain of MpMS catalyzes formation of hexaprenyl diphosphate (HexPP), whereas the N-terminal terpene cyclase (TC) domain catalyzes the cyclization of HexPP to talaropentaene. This is Talaropentaene synthase from Talaromyces verruculosus (Penicillium verruculosum).